Consider the following 281-residue polypeptide: Pantothenate synthetase (281 aa).

Residue 30–37 coordinates ATP; that stretch reads MGNLHQGH. Catalysis depends on His-37, which acts as the Proton donor. Residue Gln-61 coordinates (R)-pantoate. Gln-61 lines the beta-alanine pocket. Position 149–152 (149–152) interacts with ATP; it reads GRKD. Gln-155 serves as a coordination point for (R)-pantoate. Residues Ile-178 and 186–189 contribute to the ATP site; that span reads MSSR.

It belongs to the pantothenate synthetase family. As to quaternary structure, homodimer.

The protein localises to the cytoplasm. The catalysed reaction is (R)-pantoate + beta-alanine + ATP = (R)-pantothenate + AMP + diphosphate + H(+). The protein operates within cofactor biosynthesis; (R)-pantothenate biosynthesis; (R)-pantothenate from (R)-pantoate and beta-alanine: step 1/1. Catalyzes the condensation of pantoate with beta-alanine in an ATP-dependent reaction via a pantoyl-adenylate intermediate. The polypeptide is Pantothenate synthetase (Shewanella denitrificans (strain OS217 / ATCC BAA-1090 / DSM 15013)).